The primary structure comprises 499 residues: DNA-directed RNA polymerase subunit Rpo2N (499 aa).

It belongs to the RNA polymerase beta chain family. Part of the RNA polymerase complex.

It is found in the cytoplasm. It carries out the reaction RNA(n) + a ribonucleoside 5'-triphosphate = RNA(n+1) + diphosphate. DNA-dependent RNA polymerase (RNAP) catalyzes the transcription of DNA into RNA using the four ribonucleoside triphosphates as substrates. The Rpo2 subunit (Rpo2N and Rpo2C in this organism) is implicated in DNA promoter recognition and in nucleotide binding. The protein is DNA-directed RNA polymerase subunit Rpo2N of Methanococcus vannielii (strain ATCC 35089 / DSM 1224 / JCM 13029 / OCM 148 / SB).